Reading from the N-terminus, the 485-residue chain is MADSAVRVRIAPSPTGEPHVGTAYIALFNYLFAKKHGGKFILRIEDTDATRSTPEFEKKVLDALKWCGLEWSEGPDIGGPYGPYRQSDRKDIYKPYVEKIVANGHGFRCFCTPERLEQMREAQRAAGKPPKYDGLCLSLSAEEVTSRVDAGEPHVVRMKIPTEGSCKFRDGVYGDVEIPWEAVDMQVLLKADGMPTYHMANVVDDHLMKITHVARGEEWLASVPKHILIYQYLGLEPPVFMHLSLMRNADKSKLSKRKNPTSISYYTALGYLPEALMNFLGLFFIQIAEGEELLTMEELAEKFDPENLSKAGAIFDIQKLDWLNARWIREKLSEEEFAARVLAWAMDNERLKEGLKLSQTRISKLGELPDLAAFLFKSDLGLQPAAFAGVKASPEEMLKILNTVQPDLEKILEWNKDSIETELRASAERMGKKLKAVVAPLFVACSGSQRSLPLFDSMELLGRSVVRQRLKVAAQVVASMAGSGK.

Residues 12-22 (PSPTGEPHVGT) carry the 'HIGH' region motif. The 'KMSKS' region motif lies at 253-257 (KLSKR). ATP is bound at residue Lys256.

Belongs to the class-I aminoacyl-tRNA synthetase family. Glutamate--tRNA ligase type 1 subfamily. As to quaternary structure, monomer.

The protein resides in the cytoplasm. It catalyses the reaction tRNA(Glu) + L-glutamate + ATP = L-glutamyl-tRNA(Glu) + AMP + diphosphate. In terms of biological role, catalyzes the attachment of glutamate to tRNA(Glu) in a two-step reaction: glutamate is first activated by ATP to form Glu-AMP and then transferred to the acceptor end of tRNA(Glu). The protein is Glutamate--tRNA ligase of Rhizobium meliloti (strain 1021) (Ensifer meliloti).